The following is a 120-amino-acid chain: Large ribosomal subunit protein uL18c (120 aa).

Belongs to the universal ribosomal protein uL18 family. In terms of assembly, part of the 50S ribosomal subunit; contacts the 5S rRNA.

The protein resides in the plastid. The protein localises to the chloroplast. In terms of biological role, binds 5S rRNA, forms part of the central protuberance of the 50S subunit. This is Large ribosomal subunit protein uL18c (rpl18) from Porphyra purpurea (Red seaweed).